A 332-amino-acid chain; its full sequence is MFKPLTLIAASILAVTSFNAAANCDPGEIVIKFSHVTNTDKHPKGIAASLLEKRVNEEMNGKACMQVFPNSTLYDDDKVLEALLNGDVQLAAPSLSKFEKFTKKYRIFDLPFLFEDVDAVDRFQSSAKGEELKNAMTRRGVKGLEFWHNGMKQISANKPILVPADAKGLKFRVQASDVLVAQFEQIGANPQKMSFAETYGGLQTKVIDGQENTWSNIYGQKYFEVQDGTTETNHGILDYLVVTSSKWWDGLPADVRDQFAKILNEVTIERNAESNKVEELNKQYIIEAGGVVRTLTPEQRQQWVDALKPVWQKFEKDIGADLIEAALAANQK.

Residues 1–22 (MFKPLTLIAASILAVTSFNAAA) form the signal peptide.

This sequence belongs to the bacterial solute-binding protein 7 family. The complex comprises the extracytoplasmic solute receptor protein DctP, and the two transmembrane proteins DctQ and DctM.

Its subcellular location is the periplasm. Functionally, part of the tripartite ATP-independent periplasmic (TRAP) transport system DctPQM involved in C4-dicarboxylates uptake. The polypeptide is C4-dicarboxylate-binding periplasmic protein DctP (Vibrio cholerae serotype O1 (strain ATCC 39315 / El Tor Inaba N16961)).